A 141-amino-acid polypeptide reads, in one-letter code: Phosphoribosyl-AMP cyclohydrolase (141 aa).

Position 91 (Asp-91) interacts with Mg(2+). Zn(2+) is bound at residue Cys-92. Residues Asp-93 and Asp-95 each contribute to the Mg(2+) site. Zn(2+) is bound by residues Cys-110 and Cys-117.

It belongs to the PRA-CH family. As to quaternary structure, homodimer. Requires Mg(2+) as cofactor. Zn(2+) is required as a cofactor.

Its subcellular location is the cytoplasm. The enzyme catalyses 1-(5-phospho-beta-D-ribosyl)-5'-AMP + H2O = 1-(5-phospho-beta-D-ribosyl)-5-[(5-phospho-beta-D-ribosylamino)methylideneamino]imidazole-4-carboxamide. Its pathway is amino-acid biosynthesis; L-histidine biosynthesis; L-histidine from 5-phospho-alpha-D-ribose 1-diphosphate: step 3/9. In terms of biological role, catalyzes the hydrolysis of the adenine ring of phosphoribosyl-AMP. In Brucella anthropi (strain ATCC 49188 / DSM 6882 / CCUG 24695 / JCM 21032 / LMG 3331 / NBRC 15819 / NCTC 12168 / Alc 37) (Ochrobactrum anthropi), this protein is Phosphoribosyl-AMP cyclohydrolase.